The chain runs to 596 residues: MRNIRNFSIIAHVDHGKSTLADRIIQLCGGLQAREMEAQVLDSNPIERERGITIKAQSVSLPYTAKDGQVYHLNFIDTPGHVDFSYEVSRSLAACEGALLVVDAAQGVEAQSVANCYTAVEQGLEVVPVLNKIDLPTADVDRAKAEIEAVIGIDAEDAVAVSAKTGLNIDLVLEAIVHRIPPPTPRDTDKLQALIIDSWFDNYLGVVSLVRVMQGEIKPGSKILVMSTGRTHLVDKVGVFTPKRKELSALGAGEVGWINASIKDVHGAPVGDTLTLAADPAPHALPGFQEMQPRVFAGLFPVDAEDYPDLREALDKLRLNDAALRFEPESSEAMGFGFRCGFLGMLHMEIVQERLEREYNLNLISTAPTVVYEVLKTDGSVIPMDNPSKLPPLNNVEEIREPIIRANILTPPDYVGNIITLCEEKRGSQIGINYLGSQVQISYELPMAEVVLDFFDKLKSVSRGYASLDYHFLRFDPGPFVRVDTLINGDKVDALSIIVHRSYADRRGRELCEKMKDLIPRQMFDVAIQAAVGSQIISRSTVKAMRKNVLAKCYGGDVSRKKKLLEKQKEGKKRMKQVGRVEIPQEAFLAVLQMDK.

The region spanning Arg2–Thr184 is the tr-type G domain. Residues Asp14 to Thr19 and Asn131 to Asp134 contribute to the GTP site.

It belongs to the TRAFAC class translation factor GTPase superfamily. Classic translation factor GTPase family. LepA subfamily.

The protein localises to the cell inner membrane. The catalysed reaction is GTP + H2O = GDP + phosphate + H(+). Required for accurate and efficient protein synthesis under certain stress conditions. May act as a fidelity factor of the translation reaction, by catalyzing a one-codon backward translocation of tRNAs on improperly translocated ribosomes. Back-translocation proceeds from a post-translocation (POST) complex to a pre-translocation (PRE) complex, thus giving elongation factor G a second chance to translocate the tRNAs correctly. Binds to ribosomes in a GTP-dependent manner. This Xanthomonas oryzae pv. oryzae (strain PXO99A) protein is Elongation factor 4.